Here is a 94-residue protein sequence, read N- to C-terminus: Integration host factor subunit beta (94 aa).

The protein belongs to the bacterial histone-like protein family. In terms of assembly, heterodimer of an alpha and a beta chain.

This protein is one of the two subunits of integration host factor, a specific DNA-binding protein that functions in genetic recombination as well as in transcriptional and translational control. This chain is Integration host factor subunit beta (ihfB), found in Haemophilus influenzae (strain ATCC 51907 / DSM 11121 / KW20 / Rd).